A 500-amino-acid polypeptide reads, in one-letter code: Probable cytosol aminopeptidase (500 aa).

Lysine 264 and aspartate 269 together coordinate Mn(2+). Lysine 276 is an active-site residue. The Mn(2+) site is built by aspartate 287, aspartate 346, and glutamate 348. Arginine 350 is a catalytic residue.

It belongs to the peptidase M17 family. The cofactor is Mn(2+).

It is found in the cytoplasm. The enzyme catalyses Release of an N-terminal amino acid, Xaa-|-Yaa-, in which Xaa is preferably Leu, but may be other amino acids including Pro although not Arg or Lys, and Yaa may be Pro. Amino acid amides and methyl esters are also readily hydrolyzed, but rates on arylamides are exceedingly low.. The catalysed reaction is Release of an N-terminal amino acid, preferentially leucine, but not glutamic or aspartic acids.. In terms of biological role, presumably involved in the processing and regular turnover of intracellular proteins. Catalyzes the removal of unsubstituted N-terminal amino acids from various peptides. In Rickettsia canadensis (strain McKiel), this protein is Probable cytosol aminopeptidase.